A 108-amino-acid chain; its full sequence is Thiosulfate sulfurtransferase GlpE (108 aa).

A Rhodanese domain is found at 17-105; it reads QEKEAVLVDI…WQRQFPAEVA (89 aa). The Cysteine persulfide intermediate role is filled by cysteine 65.

The protein belongs to the GlpE family.

The protein localises to the cytoplasm. It catalyses the reaction thiosulfate + hydrogen cyanide = thiocyanate + sulfite + 2 H(+). The catalysed reaction is thiosulfate + [thioredoxin]-dithiol = [thioredoxin]-disulfide + hydrogen sulfide + sulfite + 2 H(+). Its function is as follows. Transferase that catalyzes the transfer of sulfur from thiosulfate to thiophilic acceptors such as cyanide or dithiols. May function in a CysM-independent thiosulfate assimilation pathway by catalyzing the conversion of thiosulfate to sulfite, which can then be used for L-cysteine biosynthesis. The polypeptide is Thiosulfate sulfurtransferase GlpE (Escherichia coli O8 (strain IAI1)).